The following is a 592-amino-acid chain: A-type ATP synthase subunit A (592 aa).

Residue 233–240 coordinates ATP; it reads GPFGSGKT.

This sequence belongs to the ATPase alpha/beta chains family. As to quaternary structure, has multiple subunits with at least A(3), B(3), C, D, E, F, H, I and proteolipid K(x).

The protein localises to the cell membrane. The catalysed reaction is ATP + H2O + 4 H(+)(in) = ADP + phosphate + 5 H(+)(out). Functionally, component of the A-type ATP synthase that produces ATP from ADP in the presence of a proton gradient across the membrane. The A chain is the catalytic subunit. The protein is A-type ATP synthase subunit A of Saccharolobus islandicus (strain L.S.2.15 / Lassen #1) (Sulfolobus islandicus).